Consider the following 303-residue polypeptide: Putative S-adenosyl-L-methionine-dependent methyltransferase MAB_0213c (303 aa).

S-adenosyl-L-methionine contacts are provided by residues aspartate 126 and 155–156; that span reads DL.

The protein belongs to the UPF0677 family.

Functionally, exhibits S-adenosyl-L-methionine-dependent methyltransferase activity. In Mycobacteroides abscessus (strain ATCC 19977 / DSM 44196 / CCUG 20993 / CIP 104536 / JCM 13569 / NCTC 13031 / TMC 1543 / L948) (Mycobacterium abscessus), this protein is Putative S-adenosyl-L-methionine-dependent methyltransferase MAB_0213c.